Reading from the N-terminus, the 431-residue chain is MNLESLSSFMELSKNFRHKSVLEKRQEIKSFLELSYKDFFYNNANEDFLFNMIENYIGYLSFPIGIVKNLKINGKYYSLPIATEESSVVAALNFAAKILENADLRYSLGEVLGISQIYIKSEKDLSKIFVDLGDKIKTWIEPLLTNMNQRGGGFRRLSTRHIKELGIQKLNIYVDTCDAMGANLLNSIAERVAEFIFLEFGYECVLKVLSNDISEFTAKARFVLDFKHLLPGKEDSWNLAKKIELISSIGFYEEERAVTNNKGIMNGITGVCLATFNDTRALEASVHKFASKSGKYFPLSKFYTTDNALVGEIEIPLQVGTKGGVISFNEASILSFKIMNVNSKSEFIGILSCVGLASNFAALRALAFNGIQKGHMRLHVNKILHLLKTKYNISDFEKDKLLLEMERMNIYSFDFAFKILKKIRLENENKV.

Residues Glu-85 and Asp-278 each act as charge relay system in the active site. His-375 acts as the Proton donor in catalysis.

Belongs to the HMG-CoA reductase family.

The catalysed reaction is (R)-mevalonate + 2 NAD(+) + CoA = (3S)-3-hydroxy-3-methylglutaryl-CoA + 2 NADH + 2 H(+). The protein operates within metabolic intermediate metabolism; (R)-mevalonate degradation; (S)-3-hydroxy-3-methylglutaryl-CoA from (R)-mevalonate: step 1/1. In terms of biological role, converts HMG-CoA to mevalonate. This chain is Probable 3-hydroxy-3-methylglutaryl-coenzyme A reductase, found in Borreliella burgdorferi (strain ATCC 35210 / DSM 4680 / CIP 102532 / B31) (Borrelia burgdorferi).